The following is a 367-amino-acid chain: Histidinol-phosphate aminotransferase (367 aa).

N6-(pyridoxal phosphate)lysine is present on lysine 225.

The protein belongs to the class-II pyridoxal-phosphate-dependent aminotransferase family. Histidinol-phosphate aminotransferase subfamily. In terms of assembly, homodimer. It depends on pyridoxal 5'-phosphate as a cofactor.

The catalysed reaction is L-histidinol phosphate + 2-oxoglutarate = 3-(imidazol-4-yl)-2-oxopropyl phosphate + L-glutamate. It functions in the pathway amino-acid biosynthesis; L-histidine biosynthesis; L-histidine from 5-phospho-alpha-D-ribose 1-diphosphate: step 7/9. The chain is Histidinol-phosphate aminotransferase from Hyphomonas neptunium (strain ATCC 15444).